The following is a 253-amino-acid chain: Transposase for insertion sequence element IS904 (253 aa).

Positions 90 to 253 (KATAPNKVWL…SPKDFEKYNS (164 aa)) constitute an Integrase catalytic domain.

It belongs to the transposase IS3/IS150/IS904 family.

Its function is as follows. Involved in the transposition of the insertion sequence. The sequence is that of Transposase for insertion sequence element IS904 (nisX1) from Lactococcus lactis subsp. lactis (strain IL1403) (Streptococcus lactis).